Reading from the N-terminus, the 185-residue chain is Ribosome-recycling factor (185 aa).

Belongs to the RRF family.

The protein resides in the cytoplasm. Responsible for the release of ribosomes from messenger RNA at the termination of protein biosynthesis. May increase the efficiency of translation by recycling ribosomes from one round of translation to another. The chain is Ribosome-recycling factor from Sulfurovum sp. (strain NBC37-1).